Reading from the N-terminus, the 138-residue chain is Small ribosomal subunit protein uS11c (138 aa).

The tract at residues 1–23 is disordered; the sequence is MAKAIPRRSSRRNGRIGSRKSAR.

It belongs to the universal ribosomal protein uS11 family. In terms of assembly, part of the 30S ribosomal subunit.

The protein resides in the plastid. The protein localises to the chloroplast. The protein is Small ribosomal subunit protein uS11c of Ipomoea purpurea (Common morning glory).